A 122-amino-acid polypeptide reads, in one-letter code: Large ribosomal subunit protein uL14 (122 aa).

Belongs to the universal ribosomal protein uL14 family. As to quaternary structure, part of the 50S ribosomal subunit. Forms a cluster with proteins L3 and L19. In the 70S ribosome, L14 and L19 interact and together make contacts with the 16S rRNA in bridges B5 and B8.

Functionally, binds to 23S rRNA. Forms part of two intersubunit bridges in the 70S ribosome. This Rickettsia massiliae (strain Mtu5) protein is Large ribosomal subunit protein uL14.